The following is a 146-amino-acid chain: Transcription initiation factor TFIID subunit 10b (146 aa).

Residues glycine 16–aspartate 43 form a disordered region.

Belongs to the TAF10 family. As to quaternary structure, belongs to the TFIID complex which is composed of TATA binding protein (Tbp) and a number of TBP-associated factors (TAFs). The N-terminus interacts with the histone fold of Taf8. At embryonic stage 9, expression is seen in the mesodermal layer and midgut primordia. The mesoderm-specific expression persists in later stages of development and at its highest level is detected in midgut, hindgut, and differentiating somatic muscle fibers. Coexpressed with Taf10 in the lateral epidermis and anal plate.

The protein resides in the cytoplasm. It localises to the nucleus. Functionally, TFIID is a multimeric protein complex that plays a central role in mediating promoter responses to various activators and repressors. The polypeptide is Transcription initiation factor TFIID subunit 10b (Drosophila melanogaster (Fruit fly)).